Here is a 700-residue protein sequence, read N- to C-terminus: Elongation factor G (700 aa).

In terms of domain architecture, tr-type G spans 10–286 (NKVRNIGIMA…AVIDYLPNPL (277 aa)). GTP-binding positions include 19 to 26 (AHIDAGKT), 83 to 87 (DTPGH), and 137 to 140 (NKMD).

This sequence belongs to the TRAFAC class translation factor GTPase superfamily. Classic translation factor GTPase family. EF-G/EF-2 subfamily.

The protein localises to the cytoplasm. Its function is as follows. Catalyzes the GTP-dependent ribosomal translocation step during translation elongation. During this step, the ribosome changes from the pre-translocational (PRE) to the post-translocational (POST) state as the newly formed A-site-bound peptidyl-tRNA and P-site-bound deacylated tRNA move to the P and E sites, respectively. Catalyzes the coordinated movement of the two tRNA molecules, the mRNA and conformational changes in the ribosome. This is Elongation factor G from Rhodococcus opacus (strain B4).